A 316-amino-acid polypeptide reads, in one-letter code: Transcription initiation factor IIB (316 aa).

The TFIIB-type zinc-finger motif lies at 11-42; that stretch reads PRVTCPNHPDAILVEDYRAGDMICPECGLVVG. Positions 15, 18, 34, and 37 each coordinate Zn(2+). Residues Ser70, Ser76, and Ser92 each carry the phosphoserine modification. 2 tandem repeats follow at residues 124 to 200 and 218 to 294. The DNA site is built by Lys152, Arg154, Lys189, and Lys196. Residues 189–193 are core promoter DNA-binding; that stretch reads KEIGR. N6-acetyllysine; by autocatalysis is present on Lys238. Residues 244-316 form a necessary for TATA box-bound TBP complex formation region; sequence LVPGRSPISV…DTPVDKLPQL (73 aa). Arg248 contributes to the DNA binding site. The tract at residues 249-252 is core promoter DNA-binding; that stretch reads SPIS. DNA contacts are provided by Lys272, Ala281, Thr284, Arg286, and Arg290. The segment at 283–286 is core promoter DNA-binding; the sequence is VTIR.

This sequence belongs to the TFIIB family. As to quaternary structure, found in a ternary complex with TATA box-bound TBP. Part of a TFIID-containing RNA polymerase II pre-initiation complex (PIC) that is composed of TBP and at least GTF2A1, GTF2A2, GTF2E1, GTF2E2, GTF2F1, GTF2H2, GTF2H3, GTF2H4, GTF2H5, GTF2B, TCEA1, ERCC2, ERCC3, TAF1, TAF2, TAF3, TAF4, TAF5, TAF6, TAF7, TAF8, TAF9, TAF10, TAF11, TAF12 and TAF13. Associates with TFIID-TFIIA (DA complex) to form TFIID-TFIIA-TFIIB (DAB complex), which is then recognized by RNA polymerase II (Pol II). Found in a RNA polymerase II initiation complex. Interacts (via C-terminus) with TBP; this interaction with TATA box-bound TBP guides Pol II into the PIC. Interacts (via N-terminus) with Pol II. Interacts (via C-terminus) with SSU72; this interaction is inhibited by SYMPK. Interacts with NR2F1; this interaction is direct. Interacts with PGR. Interacts with ESR1. Interacts with GTF2F1 (via C-terminus and preferentially via acetylated form); this interaction prevents binding of GTF2B to GTF2F2. Interacts with GTF2F2 (via N-terminus); this interaction is inhibited in presence of GTF2F1. Interacts with the transcription elongation factor TCEA2. Interacts with HSF1 (via transactivation domain). Interacts with GPBP1. Post-translationally, acetylated. Autoacetylated; autoacetylation at Lys-238 stimulates transcription activation.

It localises to the nucleus. The protein localises to the chromosome. It catalyses the reaction L-lysyl-[protein] + acetyl-CoA = N(6)-acetyl-L-lysyl-[protein] + CoA + H(+). General transcription factor that plays a role in transcription initiation by RNA polymerase II (Pol II). Involved in the pre-initiation complex (PIC) formation and Pol II recruitment at promoter DNA. Together with the TATA box-bound TBP forms the core initiation complex and provides a bridge between TBP and the Pol II-TFIIF complex. Released from the PIC early following the onset of transcription during the initiation and elongation transition and reassociates with TBP during the next transcription cycle. Associates with chromatin to core promoter-specific regions. Binds to two distinct DNA core promoter consensus sequence elements in a TBP-independent manner; these IIB-recognition elements (BREs) are localized immediately upstream (BREu), 5'-[GC][GC][GA]CGCC-3', and downstream (BREd), 5'-[GA]T[TGA][TG][GT][TG][TG]-3', of the TATA box element. Modulates transcription start site selection. Also exhibits autoacetyltransferase activity that contributes to the activated transcription. The polypeptide is Transcription initiation factor IIB (Mus musculus (Mouse)).